Consider the following 134-residue polypeptide: Profilin-4 (134 aa).

It belongs to the profilin family. In terms of assembly, occurs in many kinds of cells as a complex with monomeric actin in a 1:1 ratio. In terms of tissue distribution, specifically expressed in mature and germinating pollen grains, and growing pollen tubes (at protein level).

The protein localises to the cytoplasm. It localises to the cytoskeleton. Functionally, binds to actin monomers and regulates the organization of the actin cytoskeleton. At high concentrations, profilin prevents the polymerization of actin, whereas it enhances it at low concentrations. At low concentrations, associates with the poly-proline motif of formins to enhance actin filament elongation rate. Acts redundantly with PRF5 to regulate apical actin polymerization at the tip of pollen tube and control polarized pollen tube growth. Functions probably by favoring formin-mediated actin polymerization at pollen tube tips. The chain is Profilin-4 from Arabidopsis thaliana (Mouse-ear cress).